Reading from the N-terminus, the 117-residue chain is Immunoglobulin heavy variable 5-10-1 (117 aa).

The first 19 residues, Met1–Ala19, serve as a signal peptide directing secretion. The tract at residues Glu20 to Ser44 is framework-1. The region spanning Glu20–Arg117 is the Ig-like domain. Cys41 and Cys115 are disulfide-bonded. The segment at Gly45 to Trp52 is complementarity-determining-1. The tract at residues Ile53–Arg69 is framework-2. The tract at residues Ile70 to Thr77 is complementarity-determining-2. The tract at residues Asn78–Cys115 is framework-3. Positions Ala116–Arg117 are complementarity-determining-3.

In terms of assembly, immunoglobulins are composed of two identical heavy chains and two identical light chains; disulfide-linked.

The protein localises to the secreted. It is found in the cell membrane. In terms of biological role, v region of the variable domain of immunoglobulin heavy chains that participates in the antigen recognition. Immunoglobulins, also known as antibodies, are membrane-bound or secreted glycoproteins produced by B lymphocytes. In the recognition phase of humoral immunity, the membrane-bound immunoglobulins serve as receptors which, upon binding of a specific antigen, trigger the clonal expansion and differentiation of B lymphocytes into immunoglobulins-secreting plasma cells. Secreted immunoglobulins mediate the effector phase of humoral immunity, which results in the elimination of bound antigens. The antigen binding site is formed by the variable domain of one heavy chain, together with that of its associated light chain. Thus, each immunoglobulin has two antigen binding sites with remarkable affinity for a particular antigen. The variable domains are assembled by a process called V-(D)-J rearrangement and can then be subjected to somatic hypermutations which, after exposure to antigen and selection, allow affinity maturation for a particular antigen. This Homo sapiens (Human) protein is Immunoglobulin heavy variable 5-10-1.